Reading from the N-terminus, the 306-residue chain is Homoserine O-acetyltransferase (306 aa).

The active-site Acyl-thioester intermediate is the C142. 2 residues coordinate substrate: K163 and S192. The active-site Proton acceptor is the H235. E237 is an active-site residue. R249 is a substrate binding site.

It belongs to the MetA family.

It is found in the cytoplasm. It catalyses the reaction L-homoserine + acetyl-CoA = O-acetyl-L-homoserine + CoA. It participates in amino-acid biosynthesis; L-methionine biosynthesis via de novo pathway; O-acetyl-L-homoserine from L-homoserine: step 1/1. Functionally, transfers an acetyl group from acetyl-CoA to L-homoserine, forming acetyl-L-homoserine. This chain is Homoserine O-acetyltransferase, found in Brucella abortus (strain S19).